We begin with the raw amino-acid sequence, 1314 residues long: Tetratricopeptide repeat protein 21A (1314 aa).

TPR repeat units lie at residues 110 to 143 (STAL…SSGS), 214 to 247 (LPAL…DENN), 326 to 359 (ALVA…EENR), 494 to 527 (MEPL…DPTF), 529 to 561 (DAHL…NFQV), 565 to 598 (PLYH…PTSK), 616 to 649 (ASIL…FSGT), 721 to 754 (PHSS…NPHD), 755 to 788 (ASLV…SGQD), 790 to 821 (LCCE…DSGV), 831 to 863 (VKCL…QSRI), 883 to 916 (ASIC…SPTD), 918 to 950 (KVVL…EQTH), 951 to 984 (ERAA…APDN), 986 to 1018 (LVLN…SSRV), 1022 to 1055 (PGFN…STWG), 1195 to 1228 (EKSW…NKSC), 1230 to 1262 (RAYE…SHQA), and 1264 to 1297 (PAIG…HPKY).

The protein belongs to the TTC21 family. As to quaternary structure, interacts with IFT20. Interacts with IFT52. Interacts with IFT140. Interacts with CEP78; regulating IFT20 stability and localization.

Functionally, intraflagellar transport (IFT)-associated protein required for spermatogenesis. Required for sperm flagellar formation and intraflagellar transport. The sequence is that of Tetratricopeptide repeat protein 21A (Ttc21a) from Mus musculus (Mouse).